Reading from the N-terminus, the 89-residue chain is Small ribosomal subunit protein uS15 (89 aa).

It belongs to the universal ribosomal protein uS15 family. Part of the 30S ribosomal subunit. Forms a bridge to the 50S subunit in the 70S ribosome, contacting the 23S rRNA.

Its function is as follows. One of the primary rRNA binding proteins, it binds directly to 16S rRNA where it helps nucleate assembly of the platform of the 30S subunit by binding and bridging several RNA helices of the 16S rRNA. In terms of biological role, forms an intersubunit bridge (bridge B4) with the 23S rRNA of the 50S subunit in the ribosome. The polypeptide is Small ribosomal subunit protein uS15 (Haemophilus influenzae (strain PittGG)).